Reading from the N-terminus, the 293-residue chain is Formamidopyrimidine-DNA glycosylase (293 aa).

The Schiff-base intermediate with DNA role is filled by Pro2. Glu3 serves as the catalytic Proton donor. Residue Lys58 is the Proton donor; for beta-elimination activity of the active site. DNA-binding residues include His104, Arg123, and Lys166. The FPG-type zinc finger occupies 257–293; it reads AAYDREGERCRTDGCGGAVKRFVQNGRSTFWCSGCQK. Catalysis depends on Arg283, which acts as the Proton donor; for delta-elimination activity.

The protein belongs to the FPG family. Monomer. It depends on Zn(2+) as a cofactor.

The catalysed reaction is Hydrolysis of DNA containing ring-opened 7-methylguanine residues, releasing 2,6-diamino-4-hydroxy-5-(N-methyl)formamidopyrimidine.. The enzyme catalyses 2'-deoxyribonucleotide-(2'-deoxyribose 5'-phosphate)-2'-deoxyribonucleotide-DNA = a 3'-end 2'-deoxyribonucleotide-(2,3-dehydro-2,3-deoxyribose 5'-phosphate)-DNA + a 5'-end 5'-phospho-2'-deoxyribonucleoside-DNA + H(+). Its function is as follows. Involved in base excision repair of DNA damaged by oxidation or by mutagenic agents. Acts as a DNA glycosylase that recognizes and removes damaged bases. Has a preference for oxidized purines, such as 7,8-dihydro-8-oxoguanine (8-oxoG). Has AP (apurinic/apyrimidinic) lyase activity and introduces nicks in the DNA strand. Cleaves the DNA backbone by beta-delta elimination to generate a single-strand break at the site of the removed base with both 3'- and 5'-phosphates. This chain is Formamidopyrimidine-DNA glycosylase, found in Rhodopseudomonas palustris (strain BisB5).